A 1002-amino-acid chain; its full sequence is Glutamate receptor ionotropic, NMDA 3B (1002 aa).

The N-terminal stretch at 1-24 is a signal peptide; that stretch reads MESVRTLWLSVALALAVGSRVVRG. The Extracellular portion of the chain corresponds to 25-574; that stretch reads HPQPCRVPTR…PIGAFMWPLH (550 aa). N-linked (GlcNAc...) asparagine glycosylation is found at N69, N212, N344, N451, and N465. Cystine bridges form between C439–C475 and C445–C476. The glycine site is built by S531, S533, and R538. Positions 533 and 538 each coordinate D-serine. A helical membrane pass occupies residues 575–594; that stretch reads WSMWVGVFAALHLTALFLTL. Topologically, residues 595 to 615 are cytoplasmic; sequence YEWRSPYGLTPRGRNRGTVFS. Positions 616–627 form an intramembrane region, discontinuously helical; the sequence is YSSALNLCYAIL. At 628–641 the chain is on the cytoplasmic side; that stretch reads FGRTVSSKTPKCPT. A helical transmembrane segment spans residues 642–661; it reads GRFLMNLWAIFCLLVLSSYT. At 662–832 the chain is on the extracellular side; the sequence is ANLAAVMVGD…TLQMGVYHFS (171 aa). S701 is a glycine binding site. Residues S701, A702, and D745 each contribute to the D-serine site. D745 is a glycine binding site. N786 carries N-linked (GlcNAc...) asparagine glycosylation. A helical membrane pass occupies residues 833–848; the sequence is GLFVLLCLGLGSALLT. The Cytoplasmic portion of the chain corresponds to 849–1002; the sequence is SLGEHVFYRL…RLLHAAPAES (154 aa). Residues 882 to 910 form a disordered region; it reads ALNTGPPEGQQERAEQERSGPKDELPATD. Residues 891–906 show a composition bias toward basic and acidic residues; that stretch reads QQERAEQERSGPKDEL. Residues 944 to 985 adopt a coiled-coil conformation; it reads LCSNGPGLQAELRELELRIEAARERLRSALLRRGELRALLGD. The segment at 951 to 984 is involved in the trafficking and surface expression of NMDARs; it reads LQAELRELELRIEAARERLRSALLRRGELRALLG.

The protein belongs to the glutamate-gated ion channel (TC 1.A.10.1) family. NR3B/GRIN3B subfamily. Forms heterotetrameric channels that contain at least two GluN1 subunits and at least a combination of one GluN2 and one GluN3 subunits (in vitro). Forms heterotetrameric channels composed of two GluN1/zeta subunits (GRIN1), and two identical GluN3 subunits (GRIN3A or GRIN3B) (in vitro). Does not form functional homomeric channels. In terms of tissue distribution, expressed in the hippocampus, the corpus callosum, in the facial and trigeminal nuclei of the brainstem and the ventral horn of the spinal cord.

Its subcellular location is the cell membrane. The protein localises to the postsynaptic cell membrane. It carries out the reaction Ca(2+)(in) = Ca(2+)(out). It catalyses the reaction Na(+)(in) = Na(+)(out). Excitatory glycine receptors are inhibited by D-serine at a concentrion of 100uM. In terms of biological role, component of a non-conventional N-methyl-D-aspartate (NMDA) receptors (NMDARs) that function as heterotetrameric, ligand-gated cation channels with low calcium permeability and low voltage-dependent block by Mg(2+). Forms glutamatergic receptor complexes with GluN1 and GluN2 subunits which are activated by glycine binding to the GluN1 and GluN3 subunits and L-glutamate binding to GluN2 subunits. Forms excitatory glycinergic receptor complexes with GluN1 alone which are activated by glycine binding to the GluN1 and GluN3 subunits. GluN3B subunit also binds D-serine and, in the absence of glycine, activates glycinergic receptor complexes, but with lower efficacy than glycine. Each GluN3 subunit confers differential attributes to channel properties, including activation, deactivation and desensitization kinetics, pH sensitivity, Ca2(+) permeability, and binding to allosteric modulators. This Rattus norvegicus (Rat) protein is Glutamate receptor ionotropic, NMDA 3B.